Reading from the N-terminus, the 275-residue chain is Diaminopimelate epimerase (275 aa).

The substrate site is built by asparagine 12, glutamine 45, and asparagine 65. Catalysis depends on cysteine 74, which acts as the Proton donor. Substrate contacts are provided by residues 75–76 (GN), asparagine 158, asparagine 191, and 209–210 (ER). Catalysis depends on cysteine 218, which acts as the Proton acceptor. A substrate-binding site is contributed by 219–220 (GT).

This sequence belongs to the diaminopimelate epimerase family. In terms of assembly, homodimer.

Its subcellular location is the cytoplasm. It catalyses the reaction (2S,6S)-2,6-diaminopimelate = meso-2,6-diaminopimelate. It participates in amino-acid biosynthesis; L-lysine biosynthesis via DAP pathway; DL-2,6-diaminopimelate from LL-2,6-diaminopimelate: step 1/1. Catalyzes the stereoinversion of LL-2,6-diaminopimelate (L,L-DAP) to meso-diaminopimelate (meso-DAP), a precursor of L-lysine and an essential component of the bacterial peptidoglycan. This Shewanella frigidimarina (strain NCIMB 400) protein is Diaminopimelate epimerase.